Here is a 185-residue protein sequence, read N- to C-terminus: Elongation factor P (185 aa).

The protein belongs to the elongation factor P family.

The protein resides in the cytoplasm. It participates in protein biosynthesis; polypeptide chain elongation. Its function is as follows. Involved in peptide bond synthesis. Stimulates efficient translation and peptide-bond synthesis on native or reconstituted 70S ribosomes in vitro. Probably functions indirectly by altering the affinity of the ribosome for aminoacyl-tRNA, thus increasing their reactivity as acceptors for peptidyl transferase. The chain is Elongation factor P from Anoxybacillus flavithermus (strain DSM 21510 / WK1).